Here is a 150-residue protein sequence, read N- to C-terminus: Aspartate carbamoyltransferase regulatory chain (150 aa).

Residues Cys105, Cys110, Cys133, and Cys136 each contribute to the Zn(2+) site.

The protein belongs to the PyrI family. In terms of assembly, contains catalytic and regulatory chains. The cofactor is Zn(2+).

Involved in allosteric regulation of aspartate carbamoyltransferase. The protein is Aspartate carbamoyltransferase regulatory chain of Thermococcus sibiricus (strain DSM 12597 / MM 739).